The following is a 273-amino-acid chain: Dermonecrotic toxin LdSicTox-alphaIB3aiii (273 aa).

Histidine 5 is an active-site residue. Mg(2+) is bound by residues glutamate 25 and aspartate 27. Residue histidine 41 is the Nucleophile of the active site. 2 disulfides stabilise this stretch: cysteine 45–cysteine 51 and cysteine 47–cysteine 190. Aspartate 85 provides a ligand contact to Mg(2+).

Belongs to the arthropod phospholipase D family. Class II subfamily. It depends on Mg(2+) as a cofactor. In terms of tissue distribution, expressed by the venom gland.

It is found in the secreted. It catalyses the reaction an N-(acyl)-sphingosylphosphocholine = an N-(acyl)-sphingosyl-1,3-cyclic phosphate + choline. The catalysed reaction is an N-(acyl)-sphingosylphosphoethanolamine = an N-(acyl)-sphingosyl-1,3-cyclic phosphate + ethanolamine. The enzyme catalyses a 1-acyl-sn-glycero-3-phosphocholine = a 1-acyl-sn-glycero-2,3-cyclic phosphate + choline. It carries out the reaction a 1-acyl-sn-glycero-3-phosphoethanolamine = a 1-acyl-sn-glycero-2,3-cyclic phosphate + ethanolamine. Functionally, dermonecrotic toxins cleave the phosphodiester linkage between the phosphate and headgroup of certain phospholipids (sphingolipid and lysolipid substrates), forming an alcohol (often choline) and a cyclic phosphate. This toxin acts on sphingomyelin (SM). It may also act on ceramide phosphoethanolamine (CPE), lysophosphatidylcholine (LPC) and lysophosphatidylethanolamine (LPE), but not on lysophosphatidylserine (LPS), and lysophosphatidylglycerol (LPG). It acts by transphosphatidylation, releasing exclusively cyclic phosphate products as second products. Induces dermonecrosis, hemolysis, increased vascular permeability, edema, inflammatory response, and platelet aggregation. The polypeptide is Dermonecrotic toxin LdSicTox-alphaIB3aiii (Loxosceles deserta (Desert recluse spider)).